A 432-amino-acid chain; its full sequence is Short/branched chain specific acyl-CoA dehydrogenase, mitochondrial (432 aa).

A mitochondrion-targeting transit peptide spans 1–33 (MERATVRLLRGGALLRRNFPSCLSSWKTPPHAL). Lys-70 carries the N6-acetyllysine; alternate modification. An N6-succinyllysine; alternate modification is found at Lys-70. Residues 174-183 (ICISETGAGS) and 207-209 (WIS) each bind FAD. Residue Ser-183 participates in substrate binding. Ser-183 bears the Phosphoserine mark. The substrate site is built by Tyr-229 and Tyr-283. Residue Lys-284 is modified to N6-acetyllysine; alternate. Lys-284 is subject to N6-succinyllysine; alternate. Position 291–294 (291–294 (NEGR)) interacts with substrate. FAD is bound by residues Arg-319, Gln-330, and 387-391 (EWMGG). Catalysis depends on Glu-414, which acts as the Proton acceptor. 416–418 (TSN) lines the FAD pocket. The residue at position 426 (Lys-426) is an N6-acetyllysine.

It belongs to the acyl-CoA dehydrogenase family. In terms of assembly, homotetramer. It depends on FAD as a cofactor.

The protein resides in the mitochondrion matrix. The enzyme catalyses 2-methylbutanoyl-CoA + oxidized [electron-transfer flavoprotein] + H(+) = (2E)-2-methylbut-2-enoyl-CoA + reduced [electron-transfer flavoprotein]. It catalyses the reaction (2S)-2-methylbutanoyl-CoA + oxidized [electron-transfer flavoprotein] + H(+) = (2E)-2-methylbut-2-enoyl-CoA + reduced [electron-transfer flavoprotein]. It carries out the reaction (2R)-2-methylbutanoyl-CoA + oxidized [electron-transfer flavoprotein] + H(+) = ethylacryloyl-CoA + reduced [electron-transfer flavoprotein]. The catalysed reaction is butanoyl-CoA + oxidized [electron-transfer flavoprotein] + H(+) = (2E)-butenoyl-CoA + reduced [electron-transfer flavoprotein]. The enzyme catalyses 2-methylpropanoyl-CoA + oxidized [electron-transfer flavoprotein] + H(+) = 2-methylpropenoyl-CoA + reduced [electron-transfer flavoprotein]. It catalyses the reaction hexanoyl-CoA + oxidized [electron-transfer flavoprotein] + H(+) = (2E)-hexenoyl-CoA + reduced [electron-transfer flavoprotein]. It carries out the reaction valproyl-CoA + oxidized [electron-transfer flavoprotein] + H(+) = (2E)-2-propylpent-2-enoyl-CoA + reduced [electron-transfer flavoprotein]. The protein operates within lipid metabolism; mitochondrial fatty acid beta-oxidation. It functions in the pathway amino-acid degradation; L-isoleucine degradation. Short and branched chain specific acyl-CoA dehydrogenase that catalyzes the removal of one hydrogen from C-2 and C-3 of the fatty acyl-CoA thioester, resulting in the formation of trans-2-enoyl-CoA. Among the different mitochondrial acyl-CoA dehydrogenases, acts specifically on short and branched chain acyl-CoA derivatives such as (S)-2-methylbutyryl-CoA as well as short straight chain acyl-CoAs such as butyryl-CoA. Plays an important role in the metabolism of L-isoleucine by catalyzing the dehydrogenation of 2-methylbutyryl-CoA, one of the steps of the L-isoleucine catabolic pathway. Can also act on valproyl-CoA, a metabolite of the valproic acid drug. The protein is Short/branched chain specific acyl-CoA dehydrogenase, mitochondrial (ACADSB) of Bos taurus (Bovine).